Consider the following 196-residue polypeptide: Small ribosomal subunit protein uS4c (196 aa).

Residues 89–169 (MRLDNIIFRL…LPKHLTIDTV (81 aa)) form the S4 RNA-binding domain.

This sequence belongs to the universal ribosomal protein uS4 family. Part of the 30S ribosomal subunit. Contacts protein S5. The interaction surface between S4 and S5 is involved in control of translational fidelity.

It localises to the plastid. Its subcellular location is the chloroplast. Its function is as follows. One of the primary rRNA binding proteins, it binds directly to 16S rRNA where it nucleates assembly of the body of the 30S subunit. Functionally, with S5 and S12 plays an important role in translational accuracy. This chain is Small ribosomal subunit protein uS4c (rps4), found in Stipellula capensis (Cape rice grass).